Consider the following 983-residue polypeptide: Inner tegument protein (983 aa).

The segment at 474–983 (LNVNTHFAVQ…TSVSLPPASP (510 aa)) is interaction with large tegument protein. The interval 901–932 (APWESAPQPPRLRMTPDTDHEESTAGATSVPE) is disordered. A compositionally biased stretch (basic and acidic residues) spans 914–923 (MTPDTDHEES).

Belongs to the herpesviridae inner tegument protein family. As to quaternary structure, interacts (via C-terminus) with the large tegument protein/LTP (via N-terminus).

Its subcellular location is the virion tegument. The protein localises to the host cytoplasm. It is found in the host nucleus. The protein resides in the host Golgi apparatus. It localises to the host trans-Golgi network. Functionally, plays an essential role in cytoplasmic secondary envelopment during viral egress. Interacts with the capsid via the large tegument protein/LTP and participates in its transport to the host trans-Golgi network (TGN) where secondary envelopment occurs. Modulates tegumentation and capsid accumulation at the viral assembly complex. The protein is Inner tegument protein (UL47) of Homo sapiens (Human).